Here is a 385-residue protein sequence, read N- to C-terminus: Cytochrome b (385 aa).

The next 4 helical transmembrane spans lie at 32–52 (LGSL…FMAM), 76–98 (WLLR…MHIA), 113–133 (VWIV…LGYC), and 179–199 (FFAL…MHFM). Heme b contacts are provided by histidine 82 and histidine 96. Histidine 183 and histidine 197 together coordinate heme b. A ubiquinone is bound at residue histidine 202. The next 4 membrane-spanning stretches (helical) occupy residues 225–245 (FIFK…LFVF), 289–309 (LLGV…PITD), 321–341 (LSKF…QIGQ), and 348–368 (FVLM…IIVP).

It belongs to the cytochrome b family. In terms of assembly, fungal cytochrome b-c1 complex contains 10 subunits; 3 respiratory subunits, 2 core proteins and 5 low-molecular weight proteins. Cytochrome b-c1 complex is a homodimer. The cofactor is heme b.

The protein resides in the mitochondrion inner membrane. In terms of biological role, component of the ubiquinol-cytochrome c reductase complex (complex III or cytochrome b-c1 complex) that is part of the mitochondrial respiratory chain. The b-c1 complex mediates electron transfer from ubiquinol to cytochrome c. Contributes to the generation of a proton gradient across the mitochondrial membrane that is then used for ATP synthesis. This is Cytochrome b (COB) from Candida glabrata (strain ATCC 2001 / BCRC 20586 / JCM 3761 / NBRC 0622 / NRRL Y-65 / CBS 138) (Yeast).